Reading from the N-terminus, the 124-residue chain is Large ribosomal subunit protein bL12 (124 aa).

Belongs to the bacterial ribosomal protein bL12 family. In terms of assembly, homodimer. Part of the ribosomal stalk of the 50S ribosomal subunit. Forms a multimeric L10(L12)X complex, where L10 forms an elongated spine to which 2 to 4 L12 dimers bind in a sequential fashion. Binds GTP-bound translation factors.

Its function is as follows. Forms part of the ribosomal stalk which helps the ribosome interact with GTP-bound translation factors. Is thus essential for accurate translation. The protein is Large ribosomal subunit protein bL12 of Ralstonia nicotianae (strain ATCC BAA-1114 / GMI1000) (Ralstonia solanacearum).